The chain runs to 946 residues: Nonribosomal peptide synthetase pngA (946 aa).

The segment at 32 to 450 (AIASREPTRY…AGREKDSIIV (419 aa)) is adenylation (A) domain. The 80-residue stretch at 580-659 (QPRSGLEQSL…TLSDALKQHA (80 aa)) folds into the Carrier domain. At serine 618 the chain carries O-(pantetheine 4'-phosphoryl)serine. The interval 681–933 (PIWLVHPVGG…ILDAENIFSF (253 aa)) is thioesterase (TE) domain.

The protein belongs to the NRP synthetase family.

The catalysed reaction is 2 3-phenylpyruvate + H(+) = phenguignardate + H2O. In terms of biological role, nonribosomal peptide synthetase that mediates the biosynthesis of phenguignardic acid. PngA alone is sufficient for phenguignardic acid synthesis. PngA first activates phenylpyruvic acid (PPA) through its A domain to AMP-PPA. The PPA unit is then loaded to the T domain and eventually transferred to the TE domain. Another PPA unit is then loaded onto the T domain. The TE domain likely promotes the enolate formation on the attached unit, followed by a nucleophilic attack on the carbonyl to yield an ether linkage between the two units. Finally, the TE domain probably catalyzes a similar reaction to give the cyclized dioxolanone core and releases phenguignardic acid. In Aspergillus terreus (strain NIH 2624 / FGSC A1156), this protein is Nonribosomal peptide synthetase pngA.